The chain runs to 488 residues: Ribulose bisphosphate carboxylase large chain (488 aa).

The substrate site is built by Asn-127 and Thr-177. Lys-179 serves as the catalytic Proton acceptor. Lys-181 contributes to the substrate binding site. Residues Lys-205, Asp-207, and Glu-208 each contribute to the Mg(2+) site. At Lys-205 the chain carries N6-carboxylysine. Residue His-297 is the Proton acceptor of the active site. Positions 298, 330, and 382 each coordinate substrate.

This sequence belongs to the RuBisCO large chain family. Type I subfamily. Heterohexadecamer of 8 large chains and 8 small chains. It depends on Mg(2+) as a cofactor.

The protein localises to the plastid. Its subcellular location is the chloroplast. It catalyses the reaction 2 (2R)-3-phosphoglycerate + 2 H(+) = D-ribulose 1,5-bisphosphate + CO2 + H2O. The enzyme catalyses D-ribulose 1,5-bisphosphate + O2 = 2-phosphoglycolate + (2R)-3-phosphoglycerate + 2 H(+). RuBisCO catalyzes two reactions: the carboxylation of D-ribulose 1,5-bisphosphate, the primary event in carbon dioxide fixation, as well as the oxidative fragmentation of the pentose substrate in the photorespiration process. Both reactions occur simultaneously and in competition at the same active site. In Pyropia haitanensis (Red seaweed), this protein is Ribulose bisphosphate carboxylase large chain (rbcL).